The following is a 340-amino-acid chain: Ketol-acid reductoisomerase (NADP(+)) (340 aa).

Positions 1–182 (MTVTMQYEKD…GSARVGLLET (182 aa)) constitute a KARI N-terminal Rossmann domain. NADP(+)-binding positions include 26–29 (YGSQ), arginine 49, serine 53, and 83–86 (DEIQ). Histidine 108 is an active-site residue. Glycine 134 contacts NADP(+). A KARI C-terminal knotted domain is found at 183 to 328 (TFKEETEEDL…AELRKAMPFV (146 aa)). The Mg(2+) site is built by aspartate 191, glutamate 195, glutamate 227, and glutamate 231. Position 252 (serine 252) interacts with substrate.

Belongs to the ketol-acid reductoisomerase family. Mg(2+) serves as cofactor.

It carries out the reaction (2R)-2,3-dihydroxy-3-methylbutanoate + NADP(+) = (2S)-2-acetolactate + NADPH + H(+). The catalysed reaction is (2R,3R)-2,3-dihydroxy-3-methylpentanoate + NADP(+) = (S)-2-ethyl-2-hydroxy-3-oxobutanoate + NADPH + H(+). The protein operates within amino-acid biosynthesis; L-isoleucine biosynthesis; L-isoleucine from 2-oxobutanoate: step 2/4. It participates in amino-acid biosynthesis; L-valine biosynthesis; L-valine from pyruvate: step 2/4. Involved in the biosynthesis of branched-chain amino acids (BCAA). Catalyzes an alkyl-migration followed by a ketol-acid reduction of (S)-2-acetolactate (S2AL) to yield (R)-2,3-dihydroxy-isovalerate. In the isomerase reaction, S2AL is rearranged via a Mg-dependent methyl migration to produce 3-hydroxy-3-methyl-2-ketobutyrate (HMKB). In the reductase reaction, this 2-ketoacid undergoes a metal-dependent reduction by NADPH to yield (R)-2,3-dihydroxy-isovalerate. The protein is Ketol-acid reductoisomerase (NADP(+)) of Streptococcus suis (strain 98HAH33).